Reading from the N-terminus, the 687-residue chain is Bifunctional lysine-specific demethylase and histidyl-hydroxylase NO66 (687 aa).

A disordered region spans residues 1–174; that stretch reads MSDKNKKVSA…RSCPLPSKKN (174 aa). Residues 23–32 show a composition bias toward basic and acidic residues; sequence DVQKGTKNSD. 2 stretches are compositionally biased toward low complexity: residues 33 to 50 and 58 to 74; these read KNGAAKNNNNRNLASKNG and KKNGSYSDGDNGSSSSS. Residues 75–96 are compositionally biased toward acidic residues; it reads GEDEEDDSTDSSDEYESSESGE. 2 stretches are compositionally biased toward polar residues: residues 100–116 and 136–156; these read LNSHSSQSSPETPANTR and RTSSTPVGQSTSAARSTQQPK. The JmjC domain maps to 347-483; that stretch reads NPSSYLVQLR…NLMEKLMPLV (137 aa). Residues His387, Asp389, and His449 each contribute to the Fe cation site.

This sequence belongs to the ROX family. NO66 subfamily. The cofactor is Fe(2+).

Its subcellular location is the nucleus. The catalysed reaction is N(6),N(6)-dimethyl-L-lysyl(36)-[histone H3] + 2 2-oxoglutarate + 2 O2 = L-lysyl(36)-[histone H3] + 2 formaldehyde + 2 succinate + 2 CO2. Functionally, oxygenase that can act as both a histone lysine demethylase and a ribosomal histidine hydroxylase. Specifically demethylates 'Lys-4' (H3K4me) and 'Lys-36' (H3K36me) of histone H3, thereby playing a central role in histone code. The sequence is that of Bifunctional lysine-specific demethylase and histidyl-hydroxylase NO66 from Drosophila persimilis (Fruit fly).